A 508-amino-acid chain; its full sequence is Ell-associated factor Eaf (508 aa).

2 stretches are compositionally biased toward polar residues: residues 140-150 (GQGQLHSQGAN) and 161-190 (GHST…SRRN). Disordered stretches follow at residues 140-226 (GQGQ…WDAN) and 251-508 (HNSG…DDDE). S200 carries the phosphoserine modification. Over residues 251–268 (HNSGHANTSGSSTGSATG) the composition is skewed to low complexity. Composition is skewed to polar residues over residues 272-281 (FGSTSSSSHM) and 296-313 (QQMQ…QQPS). A compositionally biased stretch (low complexity) spans 314-341 (NYGRGYNGGHNHVQQQQQRNSPQQQRPP). The segment covering 391–406 (DSSDSDSGSDSDDSTE) has biased composition (acidic residues). 3 stretches are compositionally biased toward low complexity: residues 412-444 (QGQQ…HLNQ), 461-477 (HQHQ…QKQQ), and 489-502 (NDLL…SSNS).

The protein belongs to the EAF family.

It localises to the nucleus. In terms of biological role, promotes transcriptional elongation by Su(Tpl)/ELL. Essential for development. The protein is Ell-associated factor Eaf of Drosophila erecta (Fruit fly).